We begin with the raw amino-acid sequence, 209 residues long: Ribosomal RNA small subunit methyltransferase G (209 aa).

S-adenosyl-L-methionine-binding positions include Gly-71, Phe-76, 122–123 (AE), and Arg-135.

This sequence belongs to the methyltransferase superfamily. RNA methyltransferase RsmG family.

Its subcellular location is the cytoplasm. Functionally, specifically methylates the N7 position of a guanine in 16S rRNA. The protein is Ribosomal RNA small subunit methyltransferase G of Flavobacterium psychrophilum (strain ATCC 49511 / DSM 21280 / CIP 103535 / JIP02/86).